Here is a 554-residue protein sequence, read N- to C-terminus: MASSQVGDMVNGNAEPTRHLAKFPPSLWGDRFTSFTLDKQLSDKYGNEIEVLKEQVRSMVVAGGRKAVEQINLINVLERLGVSYHFEKEIEEQLEQLFAKFEDNEDYDLFTIALHFRIFRQHGYKMSCDVFNKFRDSNGEFKETVSNDVQGMLSLYEATYLKIRGEGFLDEAHAFTIAQLESLVGGPHLSSDLSEQVMHALKQSIHRGFPRLEAKHFISFYEKDASRNETLLRLAKLDFNQLQLSHREELCHIFRWWKELDLISKVPYARDRAVECFFWSTCAYYEPQHSVGRAVLTKIMLLLSVTDDTYDAYGTYDEVKLYTNAVQRWDVSAMDELPDYMKALYRALLNVYDEVERDLAKQGRAYGVHHSKEAFKEIVRSYEIEAEWFKEGYVVSFEEYMKNALVTSTGRLHTTSCFMGLEADVATTEAFEWILTKPKMVATSGAIGRLVDDVMSHDEEQERGHVATGLDCYMKQHGVSKQEAIVELYKMIENAWRDINEEMLKPTAISMKLLIRVLNLSRISDVVYKYVDGYTHPEIIKDHVISLFEDPIPM.

Mg(2+)-binding residues include D307 and D311. The DDXXD motif motif lies at 326 to 330; that stretch reads VQRWD. Residues D452, S456, and E460 each coordinate Mg(2+).

Belongs to the terpene synthase family. It depends on Mg(2+) as a cofactor.

The enzyme catalyses (2E,6E)-farnesyl diphosphate + H2O = valerianol + diphosphate. It functions in the pathway secondary metabolite biosynthesis; terpenoid biosynthesis. Functionally, terpene synthase that catalyzes the biosynthesis of the terpene valerianol, which is a volatile compound of floral scent. This chain is Valerianol synthase TPS1G, found in Camellia hiemalis (Camellia).